We begin with the raw amino-acid sequence, 233 residues long: Protein YIPF6 (233 aa).

The Cytoplasmic portion of the chain corresponds to 1–84; the sequence is MAETEGFGDS…PKKSTTLLRD (84 aa). The chain crosses the membrane as a helical span at residues 85 to 105; sequence WDLWGPLVLCVSLALMLQGGN. Over 106 to 111 the chain is Lumenal; the sequence is ADSKDD. Residues 112–132 traverse the membrane as a helical segment; sequence GGPQFAEVFVIIWFGAVVITL. Residues 133–142 are Cytoplasmic-facing; it reads NSKLLGGTIS. A helical membrane pass occupies residues 143 to 163; it reads FFQSLCVLGYCILPLTVAMLV. Topologically, residues 164–180 are lumenal; the sequence is CRLVLLLSHTTASFIVR. Residues 181–201 form a helical membrane-spanning segment; the sequence is LVVVTVMFAWSTFASTAFLAD. Over 202–208 the chain is Cytoplasmic; that stretch reads SQPPNRR. A helical membrane pass occupies residues 209–229; sequence ALAVYPIFLFYFVISWMVLTF. Over 230 to 233 the chain is Lumenal; the sequence is NTVS.

It belongs to the YIP1 family.

It localises to the golgi apparatus membrane. The protein is Protein YIPF6 (yipf6) of Xenopus tropicalis (Western clawed frog).